Reading from the N-terminus, the 180-residue chain is Large ribosomal subunit protein uL16 (180 aa).

The protein belongs to the universal ribosomal protein uL16 family.

This chain is Large ribosomal subunit protein uL16, found in Thermococcus sibiricus (strain DSM 12597 / MM 739).